The primary structure comprises 90 residues: Large ribosomal subunit protein bL27 (90 aa).

Positions 1 to 21 (MASKKAGGSTRNGRDSEAKRL) are disordered.

It belongs to the bacterial ribosomal protein bL27 family.

This Neisseria meningitidis serogroup C (strain 053442) protein is Large ribosomal subunit protein bL27.